A 427-amino-acid chain; its full sequence is Septin-6 (427 aa).

Alanine 2 is modified (N-acetylalanine). Serine 27 carries the phosphoserine modification. Positions 39–305 constitute a Septin-type G domain; sequence QGFCFNILCV…ELYRRCKLEE (267 aa). The tract at residues 49–56 is G1 motif; sequence GETGLGKS. Residues 49-56, glycine 104, 185-193, glycine 239, and arginine 254 contribute to the GTP site; these read GETGLGKS and KSDAISKSE. A G3 motif region spans residues 101-104; sequence STVG. The G4 motif stretch occupies residues 184–187; that stretch reads AKSD. Residues 321–416 adopt a coiled-coil conformation; it reads QETYEAKRNE…QSQGSQAGGS (96 aa). The residue at position 367 (lysine 367) is an N6-acetyllysine. The interval 405–427 is disordered; sequence LLQSQGSQAGGSQTLKRDKEKKN. The span at 407–417 shows a compositional bias: low complexity; that stretch reads QSQGSQAGGSQ. A Phosphoserine modification is found at serine 416. Threonine 418 bears the Phosphothreonine mark.

The protein belongs to the TRAFAC class TrmE-Era-EngA-EngB-Septin-like GTPase superfamily. Septin GTPase family. In terms of assembly, septins polymerize into heterooligomeric protein complexes that form filaments, and associate with cellular membranes, actin filaments and microtubules. GTPase activity is required for filament formation. Filaments are assembled from asymmetrical heterotrimers, composed of SEPTIN2, SEPTIN6 and SEPTIN7 that associate head-to-head to form a hexameric unit. Within the trimer, directly interacts with SEPTIN2 and SEPTIN7. Also interacts with SEPTIN9 and SEPTIN12. Interaction with SEPTIN12 alters filament structure. Component of a septin core octameric complex consisting of SEPTIN12, SEPTIN7, SEPTIN6 and SEPTIN2 or SEPTIN4 in the order 12-7-6-2-2-6-7-12 or 12-7-6-4-4-6-7-12 and located in the sperm annulus. Interacts with SOCS7. Interacts with HNRNPA1.

Its subcellular location is the cytoplasm. The protein localises to the cytoskeleton. It localises to the spindle. It is found in the chromosome. The protein resides in the centromere. Its subcellular location is the kinetochore. The protein localises to the cleavage furrow. It localises to the midbody. It is found in the cell projection. The protein resides in the cilium. Its subcellular location is the flagellum. Filament-forming cytoskeletal GTPase. Required for normal organization of the actin cytoskeleton. Involved in cytokinesis. Forms a filamentous structure with SEPTIN12, SEPTIN6, SEPTIN2 and probably SEPTIN4 at the sperm annulus which is required for the structural integrity and motility of the sperm tail during postmeiotic differentiation. The polypeptide is Septin-6 (Bos taurus (Bovine)).